A 463-amino-acid polypeptide reads, in one-letter code: Glycine--tRNA ligase (463 aa).

Arg102 is a binding site for substrate. The segment at Lys113–Gly134 is disordered. Residue Glu165 participates in substrate binding. ATP is bound by residues Arg197–Glu199, Phe207–Phe212, Glu284–Leu285, and Gly328–Arg331. Phe212–Glu216 provides a ligand contact to substrate. Residue Glu324 to Gly328 coordinates substrate.

This sequence belongs to the class-II aminoacyl-tRNA synthetase family. Homodimer.

It is found in the cytoplasm. It carries out the reaction tRNA(Gly) + glycine + ATP = glycyl-tRNA(Gly) + AMP + diphosphate. Functionally, catalyzes the attachment of glycine to tRNA(Gly). The polypeptide is Glycine--tRNA ligase (Mycolicibacterium paratuberculosis (strain ATCC BAA-968 / K-10) (Mycobacterium paratuberculosis)).